We begin with the raw amino-acid sequence, 422 residues long: Histidine--tRNA ligase (422 aa).

It belongs to the class-II aminoacyl-tRNA synthetase family. Homodimer.

The protein localises to the cytoplasm. The enzyme catalyses tRNA(His) + L-histidine + ATP = L-histidyl-tRNA(His) + AMP + diphosphate + H(+). This Vibrio vulnificus (strain CMCP6) protein is Histidine--tRNA ligase.